A 230-amino-acid chain; its full sequence is Large ribosomal subunit protein uL1 (230 aa).

The protein belongs to the universal ribosomal protein uL1 family. As to quaternary structure, part of the 50S ribosomal subunit.

Its function is as follows. Binds directly to 23S rRNA. The L1 stalk is quite mobile in the ribosome, and is involved in E site tRNA release. Protein L1 is also a translational repressor protein, it controls the translation of the L11 operon by binding to its mRNA. This chain is Large ribosomal subunit protein uL1, found in Leptospira borgpetersenii serovar Hardjo-bovis (strain L550).